A 233-amino-acid polypeptide reads, in one-letter code: Preflagellin peptidase (233 aa).

M1 is a topological domain (cytoplasmic). The helical transmembrane segment at 2–18 (IAYAIGLLGLLIASIQD) threads the bilayer. Over 19–23 (IKSRE) the chain is Extracellular. The chain crosses the membrane as a helical span at residues 24–46 (IENYIWIGMAVIGLLLSTYLSFT). At 47-49 (TGN) the chain is on the cytoplasmic side. Residues 50–72 (FMPIISSISGFIICFIIGYLMFV) form a helical membrane-spanning segment. Residues 73–78 (LGIGGA) lie on the Extracellular side of the membrane. Residues 79-89 (DGKILMGMGAL) form a helical membrane-spanning segment. Residues 90-110 (IPSYAFPVYSSLQPLYTMEYI) are Cytoplasmic-facing. A helical membrane pass occupies residues 111–139 (PWFPLLVFFNGVILMIVLPIYLFFKNLSN). The Extracellular segment spans residues 140–207 (GVKPKKLKEY…QYVWATPELP (68 aa)). The chain crosses the membrane as a helical span at residues 208–219 (LLVPIALSYIIT). The Cytoplasmic segment spans residues 220 to 233 (PFLGDKILSIILPM).

This sequence belongs to the peptidase A24 family. Archaeal preflagellin peptidase subfamily.

Its subcellular location is the cell membrane. The enzyme catalyses Cleaves the signal peptide of 3 to 12 amino acids from the N-terminal of preflagellin, usually at Arg-Gly-|- or Lys-Gly-|-, to release flagellin.. In terms of biological role, cleaves the N-terminal leader peptide from preflagellins. The processing of preflagellins is necessary for assembly of flagellins into a flagellum structure. This is Preflagellin peptidase (flaK) from Methanococcus voltae.